Here is a 422-residue protein sequence, read N- to C-terminus: Glutamyl-tRNA reductase (422 aa).

Substrate is bound by residues 50-53 (TCNR), Ser110, 115-117 (ETQ), and Gln121. The active-site Nucleophile is Cys51. NADP(+) is bound at residue 190–195 (GAGEMS).

It belongs to the glutamyl-tRNA reductase family. Homodimer.

The catalysed reaction is (S)-4-amino-5-oxopentanoate + tRNA(Glu) + NADP(+) = L-glutamyl-tRNA(Glu) + NADPH + H(+). It functions in the pathway porphyrin-containing compound metabolism; protoporphyrin-IX biosynthesis; 5-aminolevulinate from L-glutamyl-tRNA(Glu): step 1/2. Its function is as follows. Catalyzes the NADPH-dependent reduction of glutamyl-tRNA(Glu) to glutamate 1-semialdehyde (GSA). The protein is Glutamyl-tRNA reductase of Campylobacter fetus subsp. fetus (strain 82-40).